The following is a 173-amino-acid chain: Ribulose bisphosphate carboxylase small subunit, chloroplastic 5 (173 aa).

The transit peptide at 1-49 directs the protein to the chloroplast; sequence MASIPATVATVAQANMVAPFTGLKSNAAFPVTKKVNDFSTLPSNGGRVQ.

This sequence belongs to the RuBisCO small chain family. In terms of assembly, heterohexadecamer of 8 large and 8 small subunits.

The protein localises to the plastid. It is found in the chloroplast. Functionally, ruBisCO catalyzes two reactions: the carboxylation of D-ribulose 1,5-bisphosphate, the primary event in carbon dioxide fixation, as well as the oxidative fragmentation of the pentose substrate. Both reactions occur simultaneously and in competition at the same active site. Although the small subunit is not catalytic it is essential for maximal activity. The protein is Ribulose bisphosphate carboxylase small subunit, chloroplastic 5 of Flaveria pringlei.